The following is a 917-amino-acid chain: Probable dipeptidyl-aminopeptidase B (917 aa).

The segment at 1–75 is disordered; that stretch reads MTVGRRLNDE…KYRDDVEEDW (75 aa). Topologically, residues 1-93 are cytoplasmic; the sequence is MTVGRRLNDE…NAKPSQRRTQ (93 aa). Over residues 27–39 the composition is skewed to low complexity; that stretch reads DSSSTASVSLTLV. Polar residues predominate over residues 40 to 49; sequence DGTNHTTAKP. Basic and acidic residues predominate over residues 57 to 69; it reads VSRDRYADEKYRD. Residues 94–114 form a helical; Signal-anchor for type II membrane protein membrane-spanning segment; sequence IVFWLLVALCVGGWAVAFLFF. Topologically, residues 115-917 are vacuolar; the sequence is VTSPGNTIST…KRVIRRLLHR (803 aa). The segment covering 124–133 has biased composition (polar residues); the sequence is TTPDTGSGSP. A disordered region spans residues 124–150; the sequence is TTPDTGSGSPDSDVIKPGSPPAGKKIP. 3 N-linked (GlcNAc...) asparagine glycosylation sites follow: asparagine 206, asparagine 302, and asparagine 354. The Charge relay system role is filled by serine 759. Asparagine 818 carries N-linked (GlcNAc...) asparagine glycosylation. Residues aspartate 836 and histidine 869 each act as charge relay system in the active site.

It belongs to the peptidase S9B family.

It is found in the vacuole membrane. The enzyme catalyses Release of an N-terminal dipeptide, Xaa-Yaa-|-Zaa-, from a polypeptide, preferentially when Yaa is Pro, provided Zaa is neither Pro nor hydroxyproline.. Its function is as follows. Type IV dipeptidyl-peptidase which removes N-terminal dipeptides sequentially from polypeptides having unsubstituted N-termini provided that the penultimate residue is proline. This is Probable dipeptidyl-aminopeptidase B (DAPB) from Arthroderma gypseum (strain ATCC MYA-4604 / CBS 118893) (Microsporum gypseum).